The following is a 240-amino-acid chain: Urease accessory protein UreF (240 aa).

It belongs to the UreF family. As to quaternary structure, ureD, UreF and UreG form a complex that acts as a GTP-hydrolysis-dependent molecular chaperone, activating the urease apoprotein by helping to assemble the nickel containing metallocenter of UreC. The UreE protein probably delivers the nickel.

It is found in the cytoplasm. Its function is as follows. Required for maturation of urease via the functional incorporation of the urease nickel metallocenter. This Rhodopseudomonas palustris (strain TIE-1) protein is Urease accessory protein UreF.